The chain runs to 329 residues: Ketol-acid reductoisomerase (NADP(+)) (329 aa).

The region spanning 1-181 (MKIYYDQDAD…GGTRGGVLTT (181 aa)) is the KARI N-terminal Rossmann domain. NADP(+)-binding positions include 24 to 27 (YGSQ), arginine 47, and 82 to 85 (DQHQ). Histidine 107 is a catalytic residue. Glycine 133 contacts NADP(+). Residues 182–327 (TFKEETETDL…AKLRGMMSWL (146 aa)) enclose the KARI C-terminal knotted domain. The Mg(2+) site is built by aspartate 190, glutamate 194, glutamate 226, and glutamate 230. Serine 251 provides a ligand contact to substrate.

It belongs to the ketol-acid reductoisomerase family. It depends on Mg(2+) as a cofactor.

It catalyses the reaction (2R)-2,3-dihydroxy-3-methylbutanoate + NADP(+) = (2S)-2-acetolactate + NADPH + H(+). The enzyme catalyses (2R,3R)-2,3-dihydroxy-3-methylpentanoate + NADP(+) = (S)-2-ethyl-2-hydroxy-3-oxobutanoate + NADPH + H(+). It participates in amino-acid biosynthesis; L-isoleucine biosynthesis; L-isoleucine from 2-oxobutanoate: step 2/4. Its pathway is amino-acid biosynthesis; L-valine biosynthesis; L-valine from pyruvate: step 2/4. In terms of biological role, involved in the biosynthesis of branched-chain amino acids (BCAA). Catalyzes an alkyl-migration followed by a ketol-acid reduction of (S)-2-acetolactate (S2AL) to yield (R)-2,3-dihydroxy-isovalerate. In the isomerase reaction, S2AL is rearranged via a Mg-dependent methyl migration to produce 3-hydroxy-3-methyl-2-ketobutyrate (HMKB). In the reductase reaction, this 2-ketoacid undergoes a metal-dependent reduction by NADPH to yield (R)-2,3-dihydroxy-isovalerate. The chain is Ketol-acid reductoisomerase (NADP(+)) from Solidesulfovibrio magneticus (strain ATCC 700980 / DSM 13731 / RS-1) (Desulfovibrio magneticus).